Consider the following 354-residue polypeptide: Methylthioribose-1-phosphate isomerase (354 aa).

Substrate-binding positions include 58 to 60, Arg-101, and Gln-204; that span reads RGA. Residue Asp-245 is the Proton donor of the active site. 255 to 256 provides a ligand contact to substrate; that stretch reads NK.

It belongs to the eIF-2B alpha/beta/delta subunits family. MtnA subfamily.

The enzyme catalyses 5-(methylsulfanyl)-alpha-D-ribose 1-phosphate = 5-(methylsulfanyl)-D-ribulose 1-phosphate. It functions in the pathway amino-acid biosynthesis; L-methionine biosynthesis via salvage pathway; L-methionine from S-methyl-5-thio-alpha-D-ribose 1-phosphate: step 1/6. In terms of biological role, catalyzes the interconversion of methylthioribose-1-phosphate (MTR-1-P) into methylthioribulose-1-phosphate (MTRu-1-P). The chain is Methylthioribose-1-phosphate isomerase from Xylella fastidiosa (strain M23).